The chain runs to 95 residues: Large ribosomal subunit protein uL23 (95 aa).

Belongs to the universal ribosomal protein uL23 family. In terms of assembly, part of the 50S ribosomal subunit. Contacts protein L29, and trigger factor when it is bound to the ribosome.

One of the early assembly proteins it binds 23S rRNA. One of the proteins that surrounds the polypeptide exit tunnel on the outside of the ribosome. Forms the main docking site for trigger factor binding to the ribosome. The sequence is that of Large ribosomal subunit protein uL23 from Bacillus licheniformis (strain ATCC 14580 / DSM 13 / JCM 2505 / CCUG 7422 / NBRC 12200 / NCIMB 9375 / NCTC 10341 / NRRL NRS-1264 / Gibson 46).